The sequence spans 119 residues: Fluoride-specific ion channel FluC 1 (119 aa).

4 consecutive transmembrane segments (helical) span residues 2 to 22 (TGAVAPPAVLVAAGGALGAVL), 37 to 57 (AGTLVVNVVGSFVLAALTFAA), 62 to 82 (TMLLFGTGACGAFTTFASFSV), and 99 to 119 (HALGNLLGAGLAVALAWLLVA). Na(+) contacts are provided by G72 and T75.

It belongs to the fluoride channel Fluc/FEX (TC 1.A.43) family.

It is found in the cell membrane. The enzyme catalyses fluoride(in) = fluoride(out). Its activity is regulated as follows. Na(+) is not transported, but it plays an essential structural role and its presence is essential for fluoride channel function. In terms of biological role, fluoride-specific ion channel. Important for reducing fluoride concentration in the cell, thus reducing its toxicity. This chain is Fluoride-specific ion channel FluC 1, found in Halobacterium salinarum (strain ATCC 700922 / JCM 11081 / NRC-1) (Halobacterium halobium).